A 910-amino-acid polypeptide reads, in one-letter code: p53-induced death domain-containing protein 1 (910 aa).

The segment at 1–25 (MAATVEGPELEAAAAAGDASEDSDA) is disordered. Position 2 is an N-acetylalanine (Ala-2). LRR repeat units follow at residues 126–147 (HLAH…VLQM), 149–171 (GLGA…GALP), 172–194 (ALTF…GALS), 195–216 (TLQR…IGGL), 218–240 (SLLE…AGLR), 241–263 (SLRL…ARLP), and 264–285 (LLTR…LLDA). Residues Ser-299 and Ser-305 each carry the phosphoserine modification. ZU5 domains lie at 322–454 (DLDS…VSRP) and 455–596 (VSNA…WYTT). 2 peptidase S68 regions span residues 423-452 (DLET…LVVS) and 566-594 (DITA…WLWY). Catalysis depends on residues His-444, Ser-446, His-586, and Ser-588. Residues 580 to 716 (ARFQVTHFSW…TTTLDREAQA (137 aa)) form a UPA domain region. Residues 788-873 (TQSNLLSVAG…DVAEEVRAVL (86 aa)) form the Death domain. Residues 884 to 910 (IRRMGLAPKDPALPGSSAPQPPEPAQA) are disordered.

Forms a complex named the PIDDosome with CASP2 and CRADD. Forms a complex with IKBKG and RIPK1. Interacts with FADD and MADD. In terms of processing, undergoes autoproteolytic processing whose extent either directs cells towards survival or apoptotic pathways. Autoproteolytically cleaved into two main fragments PIDD-N and PIDD-C. PIDD-C can be further processed into PIDD-CC, a processing which is enhanced by DNA damage. The cleavage producing PIDD-C is required for translocation of PIDD1 to the nucleus upon DNA damage and activation of NF-kappa-B. PIDD-CC mediates the interaction with CRADD and the cleavage producing PIDD-CC is required for the activation of CASP2. PIDD-N remains associated with PIDD-C and PIDD-CC after cleavage. In terms of tissue distribution, ubiquitous.

It is found in the cytoplasm. It localises to the nucleus. Functionally, component of the DNA damage/stress response pathway that functions downstream of p53/TP53 and can either promote cell survival or apoptosis. Associated with CRADD and the CASP2 caspase, it forms the PIDDosome a complex that activates CASP2 and triggers apoptosis. Associated with IKBKG and RIPK1, it enhances sumoylation and ubiquitination of IKBKG which is important for activation of the transcription factor NF-kappa-B. This Homo sapiens (Human) protein is p53-induced death domain-containing protein 1.